Here is a 154-residue protein sequence, read N- to C-terminus: Endoribonuclease YbeY (154 aa).

Residues His113, His117, and His123 each contribute to the Zn(2+) site.

This sequence belongs to the endoribonuclease YbeY family. Zn(2+) is required as a cofactor.

The protein resides in the cytoplasm. Its function is as follows. Single strand-specific metallo-endoribonuclease involved in late-stage 70S ribosome quality control and in maturation of the 3' terminus of the 16S rRNA. This chain is Endoribonuclease YbeY, found in Aeromonas salmonicida (strain A449).